A 312-amino-acid chain; its full sequence is Malate dehydrogenase (312 aa).

NAD(+) is bound by residues 7-13 (GAAGGIG) and D34. Substrate-binding residues include R81 and R87. Residues N94 and 117–119 (ITN) each bind NAD(+). 2 residues coordinate substrate: N119 and R153. H177 (proton acceptor) is an active-site residue. M227 serves as a coordination point for NAD(+).

The protein belongs to the LDH/MDH superfamily. MDH type 1 family. Homodimer.

It carries out the reaction (S)-malate + NAD(+) = oxaloacetate + NADH + H(+). In terms of biological role, catalyzes the reversible oxidation of malate to oxaloacetate. This is Malate dehydrogenase from Escherichia coli O17:K52:H18 (strain UMN026 / ExPEC).